A 116-amino-acid chain; its full sequence is Large ribosomal subunit protein uL18 (116 aa).

Belongs to the universal ribosomal protein uL18 family. Part of the 50S ribosomal subunit; part of the 5S rRNA/L5/L18/L25 subcomplex. Contacts the 5S and 23S rRNAs.

This is one of the proteins that bind and probably mediate the attachment of the 5S RNA into the large ribosomal subunit, where it forms part of the central protuberance. The chain is Large ribosomal subunit protein uL18 from Acinetobacter baumannii (strain AB307-0294).